The primary structure comprises 235 residues: Small ribosomal subunit protein uS3 (235 aa).

The KH type-2 domain maps to 39–107 (VRKFLNKELM…PAQINIAEVK (69 aa)).

The protein belongs to the universal ribosomal protein uS3 family. In terms of assembly, part of the 30S ribosomal subunit. Forms a tight complex with proteins S10 and S14.

In terms of biological role, binds the lower part of the 30S subunit head. Binds mRNA in the 70S ribosome, positioning it for translation. The sequence is that of Small ribosomal subunit protein uS3 from Actinobacillus succinogenes (strain ATCC 55618 / DSM 22257 / CCUG 43843 / 130Z).